A 206-amino-acid polypeptide reads, in one-letter code: Small ribosomal subunit protein uS4A (206 aa).

Residues 98–164 form the S4 RNA-binding domain; that stretch reads LRLDNVAYKL…EKFKTFAENP (67 aa).

This sequence belongs to the universal ribosomal protein uS4 family. As to quaternary structure, part of the 30S ribosomal subunit. Contacts protein S5. The interaction surface between S4 and S5 is involved in control of translational fidelity.

One of the primary rRNA binding proteins, it binds directly to 16S rRNA where it nucleates assembly of the body of the 30S subunit. In terms of biological role, with S5 and S12 plays an important role in translational accuracy. In Clostridium acetobutylicum (strain ATCC 824 / DSM 792 / JCM 1419 / IAM 19013 / LMG 5710 / NBRC 13948 / NRRL B-527 / VKM B-1787 / 2291 / W), this protein is Small ribosomal subunit protein uS4A (rspD1).